Here is a 349-residue protein sequence, read N- to C-terminus: Histidinol-phosphate aminotransferase 1 (349 aa).

Lys213 is subject to N6-(pyridoxal phosphate)lysine.

This sequence belongs to the class-II pyridoxal-phosphate-dependent aminotransferase family. Histidinol-phosphate aminotransferase subfamily. As to quaternary structure, homodimer. Pyridoxal 5'-phosphate serves as cofactor.

The enzyme catalyses L-histidinol phosphate + 2-oxoglutarate = 3-(imidazol-4-yl)-2-oxopropyl phosphate + L-glutamate. The protein operates within amino-acid biosynthesis; L-histidine biosynthesis; L-histidine from 5-phospho-alpha-D-ribose 1-diphosphate: step 7/9. In Carboxydothermus hydrogenoformans (strain ATCC BAA-161 / DSM 6008 / Z-2901), this protein is Histidinol-phosphate aminotransferase 1.